Reading from the N-terminus, the 209-residue chain is Heat shock protein beta-1 (209 aa).

Arginine 12 bears the Omega-N-methylarginine mark. Serine 13 is modified (phosphoserine). Serine 15 is subject to Phosphoserine; by MAPKAPK2 and MAPKAPK3. A Phosphoserine modification is found at serine 27. An interaction with TGFB1I1 region spans residues 74–209 (APAYSRALSR…AGKSEQSGAK (136 aa)). Positions 80–188 (ALSRQLSSGV…QSAEITIPVT (109 aa)) constitute a sHSP domain. 2 positions are modified to phosphoserine; by MAPKAPK2, MAPKAPK3 and MAPKAPK5: serine 82 and serine 86. Phosphoserine occurs at positions 87, 90, and 102. At lysine 127 the chain carries N6-acetyllysine. The residue at position 178 (threonine 178) is a Phosphothreonine. A phosphoserine mark is found at serine 180 and serine 203.

It belongs to the small heat shock protein (HSP20) family. Homooligomer. Homodimer; becomes monomeric upon activation. Heterooligomer; with HSPB6. Associates with alpha- and beta-tubulin. Interacts with TGFB1I1. Interacts with CRYAB. Interacts with HSPB8. Interacts with HSPBAP1. Post-translationally, phosphorylated upon exposure to protein kinase C activators and heat shock. Phosphorylation by MAPKAPK2 and MAPKAPK3 in response to stress dissociates HSPB1 from large small heat-shock protein (sHsps) oligomers and impairs its chaperone activity and ability to protect against oxidative stress effectively. Phosphorylation by MAPKAPK5 in response to PKA stimulation induces F-actin rearrangement.

Its subcellular location is the cytoplasm. It is found in the nucleus. It localises to the cytoskeleton. The protein resides in the spindle. Small heat shock protein which functions as a molecular chaperone probably maintaining denatured proteins in a folding-competent state. Plays a role in stress resistance and actin organization. Through its molecular chaperone activity may regulate numerous biological processes including the phosphorylation and the axonal transport of neurofilament proteins. The chain is Heat shock protein beta-1 (HSPB1) from Canis lupus familiaris (Dog).